The following is a 271-amino-acid chain: DNA-binding protein HEXBP (271 aa).

Basic and acidic residues-rich tracts occupy residues 1-12 (MSETEDVKRPRT) and 21-42 (CGKEGHYARECPEADSKGDERS). Residues 1-42 (MSETEDVKRPRTESSTSCRNCGKEGHYARECPEADSKGDERS) form a disordered region. 4 consecutive CCHC-type zinc fingers follow at residues 16-33 (TSCRNCGKEGHYARECPE), 43-60 (TTCFRCGEEGHMSRECPN), 70-87 (MTCFRCGEAGHMSRDCPN), and 97-114 (FECYKCGQEGHLSRDCPS). Residues 107–136 (HLSRDCPSSQGGSRGGYGQKRGRSGAQGGY) form a disordered region. The span at 118 to 136 (GSRGGYGQKRGRSGAQGGY) shows a compositional bias: gly residues. CCHC-type zinc fingers lie at residues 140 to 157 (RTCYKCGDAGHISRDCPN), 168 to 185 (RTCYKCGDAGHISRDCPN), 196 to 213 (RKCYKCGESGHMSRECPS), 222 to 239 (RACYKCGKPGHISRECPE), and 253 to 270 (RTCYKCGEAGHISRDCPS).

The protein resides in the nucleus. Functionally, binds to single-stranded DNA located in the 5' hexanucleotide repeat region of the L.major leishmanolysin (GP63) gene. The polypeptide is DNA-binding protein HEXBP (HEXBP) (Leishmania major).